The primary structure comprises 504 residues: Glutamate--tRNA ligase (504 aa).

Residues 25–35 (PSPTGNPHVGL) carry the 'HIGH' region motif. Zn(2+) contacts are provided by cysteine 122, cysteine 124, cysteine 149, and aspartate 151. The 'KMSKS' region signature appears at 270 to 274 (KLSKR). Lysine 273 lines the ATP pocket.

Belongs to the class-I aminoacyl-tRNA synthetase family. Glutamate--tRNA ligase type 1 subfamily. In terms of assembly, monomer. Zn(2+) is required as a cofactor.

It localises to the cytoplasm. It catalyses the reaction tRNA(Glu) + L-glutamate + ATP = L-glutamyl-tRNA(Glu) + AMP + diphosphate. Catalyzes the attachment of glutamate to tRNA(Glu) in a two-step reaction: glutamate is first activated by ATP to form Glu-AMP and then transferred to the acceptor end of tRNA(Glu). The polypeptide is Glutamate--tRNA ligase (Streptomyces griseus subsp. griseus (strain JCM 4626 / CBS 651.72 / NBRC 13350 / KCC S-0626 / ISP 5235)).